Consider the following 420-residue polypeptide: MTKWKRANPNGTRDYLFEECTLIEEVEQKLRLTFLERGYEEIRTPTIEFYDVFAFQNRPIDEEKMYKFFDEKGRIIVLRPDMTIPLARVIGTQRWDTPLKVTYSGNVFRANESHSGKYNEIVQSGIEVIGIDNVRAEIECVISVIQALQKLNVQSFTIEIGQVQLYKCIVKKLSIHDEEERVLRTYIESKNYAALSNFIGEKKLDRCDETVRLLEKLPRLFGNLEVIEEAEKLASSNEMKMAIARVKEMYETMETLGYGSYISIDLGMIQHLDYYTGVIFKGYIYEIGEEIVSGGRYDELIGNFGETLPAVGLAVQVNQIVKALQEQQEPYERNQIDIVIHYELNRLAEAERLRNLLRKDGKNAWLSLFSNLSDTFQFARKNKIGTVVEAKNEYLVEYVWNEKWVVQKEGETSCVTFKLR.

It belongs to the class-II aminoacyl-tRNA synthetase family. HisZ subfamily. In terms of assembly, heteromultimer composed of HisG and HisZ subunits.

It is found in the cytoplasm. The protein operates within amino-acid biosynthesis; L-histidine biosynthesis; L-histidine from 5-phospho-alpha-D-ribose 1-diphosphate: step 1/9. In terms of biological role, required for the first step of histidine biosynthesis. May allow the feedback regulation of ATP phosphoribosyltransferase activity by histidine. The protein is ATP phosphoribosyltransferase regulatory subunit of Bacillus cereus (strain G9842).